A 269-amino-acid polypeptide reads, in one-letter code: MEFIVLLTVCALLGLSCGQHGEYCHGWTDSYGIWRPGFQCPERYDPPEATFCCGSCGLKYCCSTVESRLDQGLCPNEEDLRDGVPSIELPPTVPTYFPFLLVGSIFVSFVILGSLVGLCCCKCLKPEDDTQVSGPAPIQSRLLDQDPSTDTSRHSSSSSASMPRPPIGARPQNLCSLGAENINLYMNMPPTFPMMGCPQNAQFMHPGTAGPSFMQPPFINYAVPAEHAIIMAPAPYIDARNCYGQTSNIYCQVPQQNDQTVCSGSPSKC.

The first 18 residues, 1 to 18, serve as a signal peptide directing secretion; the sequence is MEFIVLLTVCALLGLSCG. The Extracellular portion of the chain corresponds to 19-98; it reads QHGEYCHGWT…LPPTVPTYFP (80 aa). The chain crosses the membrane as a helical span at residues 99-119; that stretch reads FLLVGSIFVSFVILGSLVGLC. Residues 120-269 lie on the Cytoplasmic side of the membrane; it reads CCKCLKPEDD…TVCSGSPSKC (150 aa). The interval 129-167 is disordered; it reads DTQVSGPAPIQSRLLDQDPSTDTSRHSSSSSASMPRPPI. Residues 146–162 are compositionally biased toward low complexity; sequence DPSTDTSRHSSSSSASM.

This sequence belongs to the shisa family. In terms of assembly, interacts with immature forms of fzd8 and fgfr.

The protein localises to the endoplasmic reticulum. Its subcellular location is the membrane. In terms of biological role, required for head formation during gastrulation. Functions as an inhibitor for the caudalizing signals wnt and fgf, does not inhibit bmp, activin and nodal signaling in head formation process. Induces retention of fzd8 in the endoplasmic reticulum and inhibits trafficking of fzd8 to the cell surface. This chain is Protein shisa-1 (shisa1), found in Xenopus laevis (African clawed frog).